The following is a 734-amino-acid chain: Amino-acid acetyltransferase, mitochondrial (734 aa).

The interval Y384 to Q433 is disordered. Basic and acidic residues-rich tracts occupy residues T392–I406 and K415–N427. The N-acetyltransferase domain occupies G555–P724.

The protein belongs to the acetyltransferase family.

Its subcellular location is the mitochondrion. The enzyme catalyses L-glutamate + acetyl-CoA = N-acetyl-L-glutamate + CoA + H(+). The protein operates within amino-acid biosynthesis; L-arginine biosynthesis; N(2)-acetyl-L-ornithine from L-glutamate: step 1/4. N-acetylglutamate synthase involved in arginine biosynthesis. In Botryotinia fuckeliana (strain B05.10) (Noble rot fungus), this protein is Amino-acid acetyltransferase, mitochondrial (arg2).